The sequence spans 334 residues: Ketol-acid reductoisomerase (NADP(+)) (334 aa).

One can recognise a KARI N-terminal Rossmann domain in the interval 2-181 (TKVYYDETVT…GATRAGVIET (180 aa)). NADP(+) is bound by residues 25–28 (YGSQ), R48, S52, and 82–85 (DEIQ). H107 is a catalytic residue. G133 contacts NADP(+). The region spanning 182 to 327 (TFKEETETDL…RELREMMPFI (146 aa)) is the KARI C-terminal knotted domain. Mg(2+) is bound by residues D190, E194, E226, and E230. Residue S251 coordinates substrate.

The protein belongs to the ketol-acid reductoisomerase family. Mg(2+) serves as cofactor.

It carries out the reaction (2R)-2,3-dihydroxy-3-methylbutanoate + NADP(+) = (2S)-2-acetolactate + NADPH + H(+). The enzyme catalyses (2R,3R)-2,3-dihydroxy-3-methylpentanoate + NADP(+) = (S)-2-ethyl-2-hydroxy-3-oxobutanoate + NADPH + H(+). It participates in amino-acid biosynthesis; L-isoleucine biosynthesis; L-isoleucine from 2-oxobutanoate: step 2/4. Its pathway is amino-acid biosynthesis; L-valine biosynthesis; L-valine from pyruvate: step 2/4. In terms of biological role, involved in the biosynthesis of branched-chain amino acids (BCAA). Catalyzes an alkyl-migration followed by a ketol-acid reduction of (S)-2-acetolactate (S2AL) to yield (R)-2,3-dihydroxy-isovalerate. In the isomerase reaction, S2AL is rearranged via a Mg-dependent methyl migration to produce 3-hydroxy-3-methyl-2-ketobutyrate (HMKB). In the reductase reaction, this 2-ketoacid undergoes a metal-dependent reduction by NADPH to yield (R)-2,3-dihydroxy-isovalerate. The protein is Ketol-acid reductoisomerase (NADP(+)) of Staphylococcus epidermidis (strain ATCC 35984 / DSM 28319 / BCRC 17069 / CCUG 31568 / BM 3577 / RP62A).